A 105-amino-acid polypeptide reads, in one-letter code: Thioredoxin (105 aa).

Residues 1 to 105 form the Thioredoxin domain; sequence ATMTLTDANF…LEAQLADVLQ (105 aa). Cysteines 29 and 32 form a disulfide.

Functionally, participates in various redox reactions through the reversible oxidation of its active center dithiol to a disulfide and catalyzes dithiol-disulfide exchange reactions. This is Thioredoxin (trxA) from Alicyclobacillus acidocaldarius subsp. acidocaldarius (Bacillus acidocaldarius).